Here is a 63-residue protein sequence, read N- to C-terminus: MARRCEVCNKGVSHGHNVSHAENKTKRTWSPNVQTVRAVVDGRVKRITVCTRCLRSGKVQRAI.

It belongs to the bacterial ribosomal protein bL28 family.

This chain is Large ribosomal subunit protein bL28, found in Symbiobacterium thermophilum (strain DSM 24528 / JCM 14929 / IAM 14863 / T).